We begin with the raw amino-acid sequence, 452 residues long: UDP-N-acetylmuramoylalanine--D-glutamate ligase (452 aa).

An ATP-binding site is contributed by 115 to 121 (GTNGKTT).

Belongs to the MurCDEF family.

The protein localises to the cytoplasm. The enzyme catalyses UDP-N-acetyl-alpha-D-muramoyl-L-alanine + D-glutamate + ATP = UDP-N-acetyl-alpha-D-muramoyl-L-alanyl-D-glutamate + ADP + phosphate + H(+). The protein operates within cell wall biogenesis; peptidoglycan biosynthesis. Cell wall formation. Catalyzes the addition of glutamate to the nucleotide precursor UDP-N-acetylmuramoyl-L-alanine (UMA). The sequence is that of UDP-N-acetylmuramoylalanine--D-glutamate ligase from Geobacter metallireducens (strain ATCC 53774 / DSM 7210 / GS-15).